The following is a 351-amino-acid chain: S-adenosylmethionine:tRNA ribosyltransferase-isomerase (351 aa).

It belongs to the QueA family. In terms of assembly, monomer.

It localises to the cytoplasm. The enzyme catalyses 7-aminomethyl-7-carbaguanosine(34) in tRNA + S-adenosyl-L-methionine = epoxyqueuosine(34) in tRNA + adenine + L-methionine + 2 H(+). The protein operates within tRNA modification; tRNA-queuosine biosynthesis. Functionally, transfers and isomerizes the ribose moiety from AdoMet to the 7-aminomethyl group of 7-deazaguanine (preQ1-tRNA) to give epoxyqueuosine (oQ-tRNA). In Idiomarina loihiensis (strain ATCC BAA-735 / DSM 15497 / L2-TR), this protein is S-adenosylmethionine:tRNA ribosyltransferase-isomerase.